Here is a 129-residue protein sequence, read N- to C-terminus: Glycine cleavage system H protein (129 aa).

Residues 24–106 (SVVVGVTQHA…YGAGWIVEIE (83 aa)) enclose the Lipoyl-binding domain. Lysine 65 bears the N6-lipoyllysine mark.

Belongs to the GcvH family. As to quaternary structure, the glycine cleavage system is composed of four proteins: P, T, L and H. Requires (R)-lipoate as cofactor.

In terms of biological role, the glycine cleavage system catalyzes the degradation of glycine. The H protein shuttles the methylamine group of glycine from the P protein to the T protein. This Myxococcus xanthus (strain DK1622) protein is Glycine cleavage system H protein.